The following is a 242-amino-acid chain: NLP effector protein 8 (242 aa).

Residues Met1–Ala17 form the signal peptide. A Conserved undecapeptide motif motif is present at residues Ala108 to Asp118. The Conserved heptapeptide motif signature appears at Gly127 to Glu133. An N-linked (GlcNAc...) asparagine glycan is attached at Asn206.

This sequence belongs to the Necrosis inducing protein (NPP1) family.

Its subcellular location is the secreted. Functionally, probable secreted effector that may act as a pathogen-associated molecular pattern (PAMP) recognized by the plant immune system. This chain is NLP effector protein 8, found in Plasmopara viticola (Downy mildew of grapevine).